A 287-amino-acid chain; its full sequence is 3-beta-hydroxysteroid sulfotransferase (287 aa).

3'-phosphoadenylyl sulfate is bound at residue 44-49 (KSGTNW). Substrate contacts are provided by tryptophan 72 and tryptophan 77. The active-site Proton acceptor is histidine 99. 3'-phosphoadenylyl sulfate is bound by residues arginine 121, serine 129, tyrosine 184, 218-223 (SSFKFM), and 247-249 (RKG).

It belongs to the sulfotransferase 1 family. Homodimer. As to expression, liver, intestine and kidney.

It is found in the cytoplasm. It carries out the reaction an alcohol + 3'-phosphoadenylyl sulfate = an alkyl sulfate + adenosine 3',5'-bisphosphate + H(+). Sulfotransferase that utilizes 3'-phospho-5'-adenylyl sulfate (PAPS) as sulfonate donor to catalyze the sulfonation of 3-beta-hydroxyl groups of neutral steroids. High preference for C21 steroid (pregnenolone). This is 3-beta-hydroxysteroid sulfotransferase (STD2) from Cavia porcellus (Guinea pig).